We begin with the raw amino-acid sequence, 122 residues long: Large ribosomal subunit protein uL24 (122 aa).

This sequence belongs to the universal ribosomal protein uL24 family. Part of the 50S ribosomal subunit.

One of two assembly initiator proteins, it binds directly to the 5'-end of the 23S rRNA, where it nucleates assembly of the 50S subunit. Its function is as follows. Located at the polypeptide exit tunnel on the outside of the subunit. This chain is Large ribosomal subunit protein uL24, found in Methanosarcina mazei (strain ATCC BAA-159 / DSM 3647 / Goe1 / Go1 / JCM 11833 / OCM 88) (Methanosarcina frisia).